The primary structure comprises 90 residues: Auxin-responsive protein SAUR22 (90 aa).

This sequence belongs to the ARG7 family.

It is found in the cell membrane. Functions as a positive effector of cell expansion through modulation of auxin transport. In Arabidopsis thaliana (Mouse-ear cress), this protein is Auxin-responsive protein SAUR22.